A 556-amino-acid polypeptide reads, in one-letter code: Urocanate hydratase (556 aa).

Residues 52–53 (GG), Q130, 176–178 (GMG), E196, R201, 242–243 (NA), 263–267 (QTSAH), 273–274 (YL), and Y322 each bind NAD(+). C410 is a catalytic residue. G492 contacts NAD(+).

This sequence belongs to the urocanase family. The cofactor is NAD(+).

It is found in the cytoplasm. It catalyses the reaction 4-imidazolone-5-propanoate = trans-urocanate + H2O. The protein operates within amino-acid degradation; L-histidine degradation into L-glutamate; N-formimidoyl-L-glutamate from L-histidine: step 2/3. In terms of biological role, catalyzes the conversion of urocanate to 4-imidazolone-5-propionate. This Acidiphilium cryptum (strain JF-5) protein is Urocanate hydratase.